A 427-amino-acid polypeptide reads, in one-letter code: Glutamate-1-semialdehyde 2,1-aminomutase (427 aa).

N6-(pyridoxal phosphate)lysine is present on Lys266.

It belongs to the class-III pyridoxal-phosphate-dependent aminotransferase family. HemL subfamily. As to quaternary structure, homodimer. Pyridoxal 5'-phosphate serves as cofactor.

It is found in the cytoplasm. The catalysed reaction is (S)-4-amino-5-oxopentanoate = 5-aminolevulinate. The protein operates within porphyrin-containing compound metabolism; protoporphyrin-IX biosynthesis; 5-aminolevulinate from L-glutamyl-tRNA(Glu): step 2/2. The sequence is that of Glutamate-1-semialdehyde 2,1-aminomutase from Aromatoleum aromaticum (strain DSM 19018 / LMG 30748 / EbN1) (Azoarcus sp. (strain EbN1)).